We begin with the raw amino-acid sequence, 419 residues long: L-rhamnose isomerase (419 aa).

Residues His-262, Asp-294, and Asp-296 each contribute to the Mn(2+) site.

It belongs to the rhamnose isomerase family. Homotetramer. It depends on Mn(2+) as a cofactor.

Its subcellular location is the cytoplasm. It catalyses the reaction L-rhamnopyranose = L-rhamnulose. The protein operates within carbohydrate degradation; L-rhamnose degradation; glycerone phosphate from L-rhamnose: step 1/3. Functionally, catalyzes the interconversion of L-rhamnose and L-rhamnulose. The protein is L-rhamnose isomerase of Salmonella typhimurium (strain LT2 / SGSC1412 / ATCC 700720).